The following is a 258-amino-acid chain: Large ribosomal subunit protein uL2x (258 aa).

Residues 211–231 are disordered; sequence HGGGNHQHIGHASTVRRDAPP.

This sequence belongs to the universal ribosomal protein uL2 family.

In Arabidopsis thaliana (Mouse-ear cress), this protein is Large ribosomal subunit protein uL2x (RPL8C).